A 664-amino-acid polypeptide reads, in one-letter code: Macoilin (664 aa).

Transmembrane regions (helical) follow at residues 28–48, 75–95, 120–140, and 154–174; these read TFLY…DFVL, AFSV…LLFI, VCLP…AIRF, and FAAH…KSYV. Positions 253-265 are enriched in basic and acidic residues; that stretch reads REKGKEKDKDAKK. The segment at 253-274 is disordered; it reads REKGKEKDKDAKKHNLGINNNN. The residue at position 305 (S305) is a Phosphoserine. The segment covering 320–348 has biased composition (polar residues); sequence KNYKNASGVVNSSPRSHSATNGSIPSSSS. Positions 320 to 375 are disordered; sequence KNYKNASGVVNSSPRSHSATNGSIPSSSSKNEKKQKCTSKGPSAHKDLMENCIPNN. N-linked (GlcNAc...) asparagine glycosylation is present at N324. Phosphoserine is present on S332. Residues N340 and N452 are each glycosylated (N-linked (GlcNAc...) asparagine). The disordered stretch occupies residues 630–664; sequence TSPLSPVSPHYSSKFVETSPSGLDPNASVYQPLKK. A phosphoserine mark is found at S631 and S634. A glycan (N-linked (GlcNAc...) asparagine) is linked at N655.

Belongs to the macoilin family. Strong expression in whole nervous system up to 12.5 dpc. Highly expressed in all neuronal differentiation fields from 14.5 dpc to birth, with highest expression in the telencephalic cortical plate and mitral cells in the olfactory bulb, and lower expression in neuronal progenitor zones. Progressively decreased expression in fields of neuron precursor proliferation from 14.5 dpc and virtually undetectable there by 17.5 dpc. No significant expression detected outside the nervous system. After birth, significant expression remains in the cerebellum, olfactory bulb and hippocampus.

Its subcellular location is the rough endoplasmic reticulum membrane. It localises to the nucleus membrane. Functionally, plays a role in the regulation of neuronal activity. In Mus musculus (Mouse), this protein is Macoilin (Maco1).